A 1166-amino-acid polypeptide reads, in one-letter code: Poly [ADP-ribose] polymerase tankyrase-2 (1166 aa).

ANK repeat units follow at residues 57 to 89 (RKST…ARDD), 90 to 122 (GGLI…ARDN), and 123 to 155 (WNYT…IRNT). Residue asparagine 203 is modified to (3S)-3-hydroxyasparagine; by HIF1AN; partial. ANK repeat units follow at residues 210-242 (RKST…AKDK), 243-275 (GDLV…AMDL), 276-308 (WQFT…LLNC), 363-398 (THET…EKTK), 399-431 (EFLT…ALDN), and 432-464 (LGQT…IISL). Position 238 is a (3S)-3-hydroxyhistidine; by HIF1AN; partial (histidine 238). Asparagine 271 carries the post-translational modification (3S)-3-hydroxyasparagine; by HIF1AN; partial. Position 427 is a (3S)-3-hydroxyasparagine; by HIF1AN; partial (asparagine 427). At asparagine 518 the chain carries (3S)-3-hydroxyasparagine; by HIF1AN; partial. 3 ANK repeats span residues 525-557 (RQST…AKDK), 558-590 (GGLV…VADL), and 591-623 (WKFT…KKNR). Residues 545 to 553 (LLQHGADVH) form an HIF1AN-binding region. Histidine 553 carries the (3S)-3-hydroxyhistidine; by HIF1AN; partial modification. Position 586 is a (3S)-3-hydroxyasparagine; by HIF1AN; partial (asparagine 586). (3S)-3-hydroxyasparagine; by HIF1AN; partial occurs at positions 671, 706, and 739. 3 ANK repeats span residues 678–710 (RHST…AQDK), 711–743 (GGLI…ATDK), and 744–776 (WAFT…LKNQ). The disordered stretch occupies residues 819–839 (GATADALSSGPSSPSSLSAAS). Low complexity predominate over residues 822-839 (ADALSSGPSSPSSLSAAS). The SAM domain occupies 873–936 (GVDFSITQFV…IKGVERLISG (64 aa)). A PARP catalytic domain is found at 959-1164 (SPDDKEFQSV…YQIMRPEGMV (206 aa)). Positions 1081, 1084, 1089, and 1092 each coordinate Zn(2+).

Belongs to the ARTD/PARP family. In terms of assembly, oligomerizes and associates with TNKS. Interacts with the cytoplasmic domain of LNPEP/Otase in SLC2A4/GLUT4-vesicles. Binds to the N-terminus of Grb14 and TRF1 with its ankyrin repeat region. Interacts with HIF1AN. Interacts with RNF146; this interaction leads to ubiquitination and proteasomal degradation. Interacts with NUMA1. Ubiquitinated at 'Lys-48' and 'Lys-63' by RNF146 when auto-poly-ADP-ribosylated; this leads to degradation. Deubiquitinated by USP25; leading to stabilization. In terms of processing, ADP-ribosylated (-auto). Poly-ADP-ribosylated protein is recognized by RNF146, followed by ubiquitination. Post-translationally, the crystallographic evidence suggests that the 3-hydroxyhistidine may be the (3S) stereoisomer. In terms of tissue distribution, highly expressed in placenta, skeletal muscle, liver, brain, kidney, heart, thymus, spinal cord, lung, peripheral blood leukocytes, pancreas, lymph nodes, spleen, prostate, testis, ovary, small intestine, colon, mammary gland, breast and breast carcinoma, and in common-type meningioma. Highly expressed in fetal liver, heart and brain.

The protein localises to the cytoplasm. It localises to the golgi apparatus membrane. The protein resides in the nucleus. It is found in the chromosome. Its subcellular location is the telomere. The catalysed reaction is NAD(+) + (ADP-D-ribosyl)n-acceptor = nicotinamide + (ADP-D-ribosyl)n+1-acceptor + H(+).. The enzyme catalyses L-aspartyl-[protein] + NAD(+) = 4-O-(ADP-D-ribosyl)-L-aspartyl-[protein] + nicotinamide. It carries out the reaction L-glutamyl-[protein] + NAD(+) = 5-O-(ADP-D-ribosyl)-L-glutamyl-[protein] + nicotinamide. Specifically inhibited by XAV939, a small molecule, leading to inhibit the Wnt signaling pathway by stabilizing AXIN1 and AXIN2. Inhibited by talazoparib. Functionally, poly-ADP-ribosyltransferase involved in various processes such as Wnt signaling pathway, telomere length and vesicle trafficking. Acts as an activator of the Wnt signaling pathway by mediating poly-ADP-ribosylation of AXIN1 and AXIN2, 2 key components of the beta-catenin destruction complex: poly-ADP-ribosylated target proteins are recognized by RNF146, which mediates their ubiquitination and subsequent degradation. Also mediates poly-ADP-ribosylation of BLZF1 and CASC3, followed by recruitment of RNF146 and subsequent ubiquitination. Mediates poly-ADP-ribosylation of TERF1, thereby contributing to the regulation of telomere length. Stimulates 26S proteasome activity. The chain is Poly [ADP-ribose] polymerase tankyrase-2 from Homo sapiens (Human).